The sequence spans 194 residues: MFEFITDEDERGQVGIGTLIVFIAMVLVAAIAAGVLINTAGFLQSKGSATGEEASAQVSNRINIVSAYGNVNNEEVDYVNLTVRQAAGADNINLSKSTIQWIGPDKATTLTHANAADKTTLGEEFNTTSIKGNNDNVLVQQSDRIKVIMYAGGVSSKLGAGDEVQLTVTTQYGSKTTYWANVPESLKDKNAVKL.

Residues 1–12 (MFEFITDEDERG) constitute a propeptide that is removed on maturation.

It belongs to the archaeal flagellin family. In terms of processing, glycosylated.

The protein localises to the archaeal flagellum. In terms of biological role, flagellin is the subunit protein which polymerizes to form the filaments of archaeal flagella. This Halobacterium salinarum (strain ATCC 700922 / JCM 11081 / NRC-1) (Halobacterium halobium) protein is Flagellin A2 (flaA2).